A 235-amino-acid chain; its full sequence is Biosynthetic peptidoglycan transglycosylase (235 aa).

A helical membrane pass occupies residues 12–34 (GLGKLLLAALLSTIVSVALLRFI).

It belongs to the glycosyltransferase 51 family.

It localises to the cell inner membrane. The catalysed reaction is [GlcNAc-(1-&gt;4)-Mur2Ac(oyl-L-Ala-gamma-D-Glu-L-Lys-D-Ala-D-Ala)](n)-di-trans,octa-cis-undecaprenyl diphosphate + beta-D-GlcNAc-(1-&gt;4)-Mur2Ac(oyl-L-Ala-gamma-D-Glu-L-Lys-D-Ala-D-Ala)-di-trans,octa-cis-undecaprenyl diphosphate = [GlcNAc-(1-&gt;4)-Mur2Ac(oyl-L-Ala-gamma-D-Glu-L-Lys-D-Ala-D-Ala)](n+1)-di-trans,octa-cis-undecaprenyl diphosphate + di-trans,octa-cis-undecaprenyl diphosphate + H(+). The protein operates within cell wall biogenesis; peptidoglycan biosynthesis. In terms of biological role, peptidoglycan polymerase that catalyzes glycan chain elongation from lipid-linked precursors. This Aeromonas hydrophila subsp. hydrophila (strain ATCC 7966 / DSM 30187 / BCRC 13018 / CCUG 14551 / JCM 1027 / KCTC 2358 / NCIMB 9240 / NCTC 8049) protein is Biosynthetic peptidoglycan transglycosylase.